We begin with the raw amino-acid sequence, 450 residues long: Acyltransferase GLAUCE (450 aa).

Catalysis depends on proton acceptor residues His171 and Glu394.

It belongs to the plant acyltransferase family. In terms of tissue distribution, restricted to the central cells of embryo sacs.

The protein resides in the cytoplasm. Its subcellular location is the nucleus. Its function is as follows. Required for double fertilization of the egg cell and the central cell by two sperm cells, resulting in the formation of the embryo and the endosperm. Involved in the regulation of embryonic expression of PHE1. Essential in maternal tissues to ensure the paternal embryonic expression of several genes, including RPS5a and FAC1, both of which being essential for early embryo and endosperm development in fertilized seeds. The chain is Acyltransferase GLAUCE from Arabidopsis thaliana (Mouse-ear cress).